Here is a 222-residue protein sequence, read N- to C-terminus: Charged multivesicular body protein 3 (222 aa).

G2 carries the N-myristoyl glycine lipid modification. Residues 2-113 (GLFGKTQEKP…LQKSTEVMKA (112 aa)) are intramolecular interaction with C-terminus. Residues 22–54 (KIRKEMRVVDRQIRDIQREEEKVKRSVKDAAKK) are a coiled coil. 2 important for autoinhibitory function regions span residues 59–64 (VCVVLA) and 168–169 (IL). A coiled-coil region spans residues 141–222 (EEMLEDTFES…MQSRLATLRS (82 aa)). An intramolecular interaction with N-terminus region spans residues 151–220 (MDDQEEMEEE…EAMQSRLATL (70 aa)). Residues 151–222 (MDDQEEMEEE…MQSRLATLRS (72 aa)) form an interaction with VPS4A region. K179 participates in a covalent cross-link: Glycyl lysine isopeptide (Lys-Gly) (interchain with G-Cter in ubiquitin). The disordered stretch occupies residues 180 to 222 (APSKVTDALPEPEPSGAMAASEDEEEEEEALEAMQSRLATLRS). Interaction with STAMBP stretches follow at residues 196–222 (AMAA…TLRS), 203–207 (EEEEE), and 221–222 (RS). S200 carries the post-translational modification Phosphoserine. Residues 200–210 (SEDEEEEEEAL) show a composition bias toward acidic residues. The MIT-interacting motif signature appears at 201–211 (EDEEEEEEALE).

This sequence belongs to the SNF7 family. Probable core component of the endosomal sorting required for transport complex III (ESCRT-III). ESCRT-III components are thought to multimerize to form a flat lattice on the perimeter membrane of the endosome. Several assembly forms of ESCRT-III may exist that interact and act sequentially. Forms a metastable monomer in solution; its core structure (without part of the putative autoinhibitory C-terminal acidic region) oligomerizes into a flat lattice via two different dimerization interfaces. In vitro, heteromerizes with CHMP2A (but not CHMP4) to form helical tubular structures that expose membrane-interacting sites on the outside whereas VPS4B can associate on the inside of the tubule. May interact with IGFBP7; the relevance of such interaction however remains unclear. Interacts with CHMP2A. Interacts with CHMP4A; the interaction requires the release of CHMP4A autoinhibition. Interacts with VPS4A. Interacts with STAMBP; the interaction appears to relieve the autoinhibition of CHMP3. Interacts with VTA1.

The protein localises to the cytoplasm. Its subcellular location is the cytosol. It is found in the membrane. The protein resides in the endosome. It localises to the late endosome membrane. Functionally, probable core component of the endosomal sorting required for transport complex III (ESCRT-III) which is involved in multivesicular bodies (MVBs) formation and sorting of endosomal cargo proteins into MVBs. MVBs contain intraluminal vesicles (ILVs) that are generated by invagination and scission from the limiting membrane of the endosome and mostly are delivered to lysosomes enabling degradation of membrane proteins, such as stimulated growth factor receptors, lysosomal enzymes and lipids. The MVB pathway appears to require the sequential function of ESCRT-O, -I,-II and -III complexes. ESCRT-III proteins mostly dissociate from the invaginating membrane before the ILV is released. The ESCRT machinery also functions in topologically equivalent membrane fission events, such as the terminal stages of cytokinesis and the budding of enveloped viruses (lentiviruses). ESCRT-III proteins are believed to mediate the necessary vesicle extrusion and/or membrane fission activities, possibly in conjunction with the AAA ATPase VPS4. Selectively binds to phosphatidylinositol 3,5-bisphosphate PtdIns(3,5)P2 and PtdIns(3,4)P2 in preference to other phosphoinositides tested. Involved in late stages of cytokinesis. Plays a role in endosomal sorting/trafficking of EGF receptor. In Pongo abelii (Sumatran orangutan), this protein is Charged multivesicular body protein 3 (CHMP3).